The sequence spans 470 residues: Ribulose bisphosphate carboxylase large chain (470 aa).

K5 bears the N6,N6,N6-trimethyllysine mark. Substrate contacts are provided by N114 and T164. Residue K166 is the Proton acceptor of the active site. K168 provides a ligand contact to substrate. Mg(2+) is bound by residues K192, D194, and E195. K192 carries the N6-carboxylysine modification. The Proton acceptor role is filled by H285. Substrate-binding residues include R286, H318, and S370.

Belongs to the RuBisCO large chain family. Type I subfamily. Heterohexadecamer of 8 large chains and 8 small chains; disulfide-linked. The disulfide link is formed within the large subunit homodimers. Mg(2+) serves as cofactor. The disulfide bond which can form in the large chain dimeric partners within the hexadecamer appears to be associated with oxidative stress and protein turnover.

It localises to the plastid. Its subcellular location is the chloroplast. It catalyses the reaction 2 (2R)-3-phosphoglycerate + 2 H(+) = D-ribulose 1,5-bisphosphate + CO2 + H2O. It carries out the reaction D-ribulose 1,5-bisphosphate + O2 = 2-phosphoglycolate + (2R)-3-phosphoglycerate + 2 H(+). Functionally, ruBisCO catalyzes two reactions: the carboxylation of D-ribulose 1,5-bisphosphate, the primary event in carbon dioxide fixation, as well as the oxidative fragmentation of the pentose substrate in the photorespiration process. Both reactions occur simultaneously and in competition at the same active site. This chain is Ribulose bisphosphate carboxylase large chain, found in Bertiera breviflora.